The chain runs to 180 residues: Large ribosomal subunit protein uL5 (180 aa).

This sequence belongs to the universal ribosomal protein uL5 family. As to quaternary structure, part of the 50S ribosomal subunit; part of the 5S rRNA/L5/L18/L25 subcomplex. Contacts the 5S rRNA and the P site tRNA. Forms a bridge to the 30S subunit in the 70S ribosome.

Its function is as follows. This is one of the proteins that bind and probably mediate the attachment of the 5S RNA into the large ribosomal subunit, where it forms part of the central protuberance. In the 70S ribosome it contacts protein S13 of the 30S subunit (bridge B1b), connecting the 2 subunits; this bridge is implicated in subunit movement. Contacts the P site tRNA; the 5S rRNA and some of its associated proteins might help stabilize positioning of ribosome-bound tRNAs. The protein is Large ribosomal subunit protein uL5 of Synechocystis sp. (strain ATCC 27184 / PCC 6803 / Kazusa).